A 278-amino-acid chain; its full sequence is Tryptophan synthase alpha chain (278 aa).

Active-site proton acceptor residues include Glu49 and Asp60.

Belongs to the TrpA family. Tetramer of two alpha and two beta chains.

The enzyme catalyses (1S,2R)-1-C-(indol-3-yl)glycerol 3-phosphate + L-serine = D-glyceraldehyde 3-phosphate + L-tryptophan + H2O. It participates in amino-acid biosynthesis; L-tryptophan biosynthesis; L-tryptophan from chorismate: step 5/5. In terms of biological role, the alpha subunit is responsible for the aldol cleavage of indoleglycerol phosphate to indole and glyceraldehyde 3-phosphate. The protein is Tryptophan synthase alpha chain of Rhodopirellula baltica (strain DSM 10527 / NCIMB 13988 / SH1).